A 284-amino-acid polypeptide reads, in one-letter code: Undecaprenyl-diphosphatase (284 aa).

A run of 8 helical transmembrane segments spans residues 7-27, 44-64, 90-110, 116-136, 167-187, 197-217, 229-249, and 259-279; these read IILG…TGHL, EMFD…LYFH, LWLK…PLND, FYHF…FIVI, VLSL…ALLI, FTFF…ILHF, FGVL…AIKF, and FTFF…YAAF.

The protein belongs to the UppP family.

It is found in the cell membrane. It catalyses the reaction di-trans,octa-cis-undecaprenyl diphosphate + H2O = di-trans,octa-cis-undecaprenyl phosphate + phosphate + H(+). Functionally, catalyzes the dephosphorylation of undecaprenyl diphosphate (UPP). Confers resistance to bacitracin. This chain is Undecaprenyl-diphosphatase, found in Lactococcus lactis subsp. cremoris (strain SK11).